A 320-amino-acid polypeptide reads, in one-letter code: UV DNA damage endonuclease (320 aa).

This sequence belongs to the uve1/UvsE family.

Component in a DNA repair pathway. Removal of UV LIGHT damaged nucleotides. Recognizes pyrimidine dimers and cleave a phosphodiester bond immediately 5' to the lesion. This is UV DNA damage endonuclease from Bacillus pumilus (strain SAFR-032).